Consider the following 237-residue polypeptide: Probable septum site-determining protein MinC (237 aa).

This sequence belongs to the MinC family. As to quaternary structure, interacts with MinD and FtsZ.

In terms of biological role, cell division inhibitor that blocks the formation of polar Z ring septums. Rapidly oscillates between the poles of the cell to destabilize FtsZ filaments that have formed before they mature into polar Z rings. Prevents FtsZ polymerization. This chain is Probable septum site-determining protein MinC, found in Neisseria gonorrhoeae.